The sequence spans 270 residues: Phosphatidylglycerol--prolipoprotein diacylglyceryl transferase (270 aa).

A run of 7 helical transmembrane segments spans residues Leu-17–Gly-37, Met-59–Tyr-79, Trp-95–Phe-115, Phe-129–Gly-149, Pro-175–Phe-195, Met-202–Phe-222, and Leu-237–Trp-257. Arg-142 is an a 1,2-diacyl-sn-glycero-3-phospho-(1'-sn-glycerol) binding site.

The protein belongs to the Lgt family.

The protein localises to the cell inner membrane. It carries out the reaction L-cysteinyl-[prolipoprotein] + a 1,2-diacyl-sn-glycero-3-phospho-(1'-sn-glycerol) = an S-1,2-diacyl-sn-glyceryl-L-cysteinyl-[prolipoprotein] + sn-glycerol 1-phosphate + H(+). It functions in the pathway protein modification; lipoprotein biosynthesis (diacylglyceryl transfer). Its function is as follows. Catalyzes the transfer of the diacylglyceryl group from phosphatidylglycerol to the sulfhydryl group of the N-terminal cysteine of a prolipoprotein, the first step in the formation of mature lipoproteins. This Cupriavidus metallidurans (strain ATCC 43123 / DSM 2839 / NBRC 102507 / CH34) (Ralstonia metallidurans) protein is Phosphatidylglycerol--prolipoprotein diacylglyceryl transferase.